We begin with the raw amino-acid sequence, 262 residues long: Putative hydro-lyase Cbei_2760 (262 aa).

This sequence belongs to the D-glutamate cyclase family.

The chain is Putative hydro-lyase Cbei_2760 from Clostridium beijerinckii (strain ATCC 51743 / NCIMB 8052) (Clostridium acetobutylicum).